Consider the following 324-residue polypeptide: Ribose 1,5-bisphosphate isomerase (324 aa).

Substrate contacts are provided by residues 22 to 25 and Arg65; that span reads RGAG. Cys135 (proton acceptor) is an active-site residue. 137–139 is a binding site for substrate; it reads SKA. Asp204 (proton donor) is an active-site residue. Lys240 is a binding site for substrate.

The protein belongs to the eIF-2B alpha/beta/delta subunits family. R15P isomerase subfamily.

The catalysed reaction is alpha-D-ribose 1,5-bisphosphate = D-ribulose 1,5-bisphosphate. In terms of biological role, catalyzes the isomerization of ribose 1,5-bisphosphate (R15P) to ribulose 1,5-bisphosphate (RuBP), the CO(2) acceptor and substrate for RubisCO. Functions in an archaeal AMP degradation pathway, together with AMP phosphorylase and RubisCO. This is Ribose 1,5-bisphosphate isomerase from Pyrococcus furiosus (strain ATCC 43587 / DSM 3638 / JCM 8422 / Vc1).